The sequence spans 300 residues: Fatty acid hydroxylase uhd1 (300 aa).

NADP(+) contacts are provided by residues glycine 14–glycine 20, arginine 39, aspartate 63–leucine 64, valine 83–serine 85, tyrosine 156, lysine 160, proline 183–isoleucine 186, and serine 199. The Proton donor role is filled by lysine 160.

It belongs to the NAD(P)-dependent epimerase/dehydratase family. Dihydroflavonol-4-reductase subfamily.

It functions in the pathway secondary metabolite biosynthesis. Its function is as follows. Fatty acid hydroxylase; part of the gene cluster that mediates the biosynthesis of the glycolipid biosurfactant ustilagic acid (UA). UA is a secreted cellobiose glycolipid that is toxic for many microorganisms and confers biocontrol activity to U.maydis. UA consists of 15,16-dihydroxypalmitic or 2,15,16-trihydroxypalmitic acid, which is O-glycosidically linked to cellobiose at its terminal hydroxyl group. In addition, the cellobiose moiety is acetylated and acylated with a short-chain hydroxy fatty acid. UA biosynthesis starts with omega-hydroxylation of palmitic acid catalyzed by the cytochrome P450 monooxygenase cyp1. Terminal hydroxylation of palmitic acid precedes subterminal hydroxylation catalyzed by the cytochrome P450 monooxygenase cyp2. Sequential glucosylation of the hydroxy fatty acid is probably catalyzed by the glycosyltransferase ugt1. The cellobiose lipid is further decorated by acetylation of the proximal glucose residue and by acylation with a short-chain beta-hydroxy fatty acid at the distal glucose residue. The acyltransferase uat1 may be a good candidate for catalyzing either acetylation or acylation of the cellobiose lipid. The fatty acid synthase fas2 may be involved in synthesis of the carbon backbone of the short-chain beta-hydroxy fatty acid esterified to the cellobiose disaccharide. The secreted UA consists of a mixture of both alpha-hydroxylated and non-hydroxylated glycolipids; therefore, alpha-hydroxylation of the long-chain fatty, catalyzed by the fatty acid hydroxylase ahd1, occurs late in UA biosynthesis and may be the last step before secretion. The chain is Fatty acid hydroxylase uhd1 from Mycosarcoma maydis (Corn smut fungus).